A 201-amino-acid chain; its full sequence is Dephospho-CoA kinase (201 aa).

The 196-residue stretch at 6 to 201 (VMGLTGSIGM…RAIREKNPRG (196 aa)) folds into the DPCK domain. 14-19 (GMGKSA) lines the ATP pocket.

Belongs to the CoaE family.

The protein localises to the cytoplasm. It carries out the reaction 3'-dephospho-CoA + ATP = ADP + CoA + H(+). It functions in the pathway cofactor biosynthesis; coenzyme A biosynthesis; CoA from (R)-pantothenate: step 5/5. In terms of biological role, catalyzes the phosphorylation of the 3'-hydroxyl group of dephosphocoenzyme A to form coenzyme A. This is Dephospho-CoA kinase from Novosphingobium aromaticivorans (strain ATCC 700278 / DSM 12444 / CCUG 56034 / CIP 105152 / NBRC 16084 / F199).